Here is a 209-residue protein sequence, read N- to C-terminus: Thymidylate kinase (209 aa).

An ATP-binding site is contributed by 13–20; sequence GLEGAGKS.

The protein belongs to the thymidylate kinase family.

The catalysed reaction is dTMP + ATP = dTDP + ADP. Its function is as follows. Phosphorylation of dTMP to form dTDP in both de novo and salvage pathways of dTTP synthesis. The sequence is that of Thymidylate kinase from Shewanella sp. (strain ANA-3).